Consider the following 347-residue polypeptide: Guanine nucleotide-binding protein subunit beta (347 aa).

WD repeat units lie at residues 60 to 90 (GHLA…LVWD), 102 to 132 (LRSS…SIYN), 148 to 177 (SHTG…ILWD), 189 to 219 (DHNG…KLWD), 231 to 261 (GHEA…RLFD), 275 to 305 (NILC…NVWD), and 317 to 347 (GHGN…KIWA).

This sequence belongs to the WD repeat G protein beta family. In terms of assembly, g proteins are composed of 3 units, alpha, beta and gamma. Interacts with gpgA, and this requires phlp1.

The protein localises to the cytoplasm. It localises to the cell membrane. Guanine nucleotide-binding proteins (G proteins) are involved as a modulator or transducer in various transmembrane signaling systems. The beta and gamma chains are required for the GTPase activity, for replacement of GDP by GTP, and for G protein-effector interaction. Required for normal chemotaxis in response to cAMP and for aggregation during scorocarp development. This chain is Guanine nucleotide-binding protein subunit beta (gpbA), found in Dictyostelium discoideum (Social amoeba).